The chain runs to 317 residues: Acetyl-coenzyme A carboxylase carboxyl transferase subunit alpha (317 aa).

A CoA carboxyltransferase C-terminal domain is found at 37-292 (RLEKKAEKLR…RICLKKHLDD (256 aa)).

It belongs to the AccA family. Acetyl-CoA carboxylase is a heterohexamer composed of biotin carboxyl carrier protein (AccB), biotin carboxylase (AccC) and two subunits each of ACCase subunit alpha (AccA) and ACCase subunit beta (AccD).

It is found in the cytoplasm. The enzyme catalyses N(6)-carboxybiotinyl-L-lysyl-[protein] + acetyl-CoA = N(6)-biotinyl-L-lysyl-[protein] + malonyl-CoA. It functions in the pathway lipid metabolism; malonyl-CoA biosynthesis; malonyl-CoA from acetyl-CoA: step 1/1. Its function is as follows. Component of the acetyl coenzyme A carboxylase (ACC) complex. First, biotin carboxylase catalyzes the carboxylation of biotin on its carrier protein (BCCP) and then the CO(2) group is transferred by the carboxyltransferase to acetyl-CoA to form malonyl-CoA. The chain is Acetyl-coenzyme A carboxylase carboxyl transferase subunit alpha from Syntrophotalea carbinolica (strain DSM 2380 / NBRC 103641 / GraBd1) (Pelobacter carbinolicus).